Consider the following 271-residue polypeptide: MANYTAADVKRLRELTGAGMLDSKNALVEAEGDFDKAVELLRIKGAKDVGKRAERATAEGLVAAKDGALIELNSETDFVAKNGEFQALADQIVAAAAAAKAADVDALKAVKLGDTTVEQAIADLSAKIGEKLELRRATYFDGTTETYLHKRAADLPPAVGVLVEYTGGDTSAAHAVALQIAALKAKYLTREDVPADIVANERRIAEETARNEGKPEQALSKIVEGRVTGFYKDVVLLDQPAVSDNKKSVKALLDEAGVTVTRFVRFEVGQA.

Positions 76-79 are involved in Mg(2+) ion dislocation from EF-Tu; the sequence is TDFV.

It belongs to the EF-Ts family.

It localises to the cytoplasm. Associates with the EF-Tu.GDP complex and induces the exchange of GDP to GTP. It remains bound to the aminoacyl-tRNA.EF-Tu.GTP complex up to the GTP hydrolysis stage on the ribosome. This is Elongation factor Ts from Mycolicibacterium vanbaalenii (strain DSM 7251 / JCM 13017 / BCRC 16820 / KCTC 9966 / NRRL B-24157 / PYR-1) (Mycobacterium vanbaalenii).